Consider the following 96-residue polypeptide: Phosphoribosyl-ATP pyrophosphatase (96 aa).

The protein belongs to the PRA-PH family.

The protein resides in the cytoplasm. It carries out the reaction 1-(5-phospho-beta-D-ribosyl)-ATP + H2O = 1-(5-phospho-beta-D-ribosyl)-5'-AMP + diphosphate + H(+). It participates in amino-acid biosynthesis; L-histidine biosynthesis; L-histidine from 5-phospho-alpha-D-ribose 1-diphosphate: step 2/9. The protein is Phosphoribosyl-ATP pyrophosphatase of Methanococcus maripaludis (strain C5 / ATCC BAA-1333).